A 131-amino-acid polypeptide reads, in one-letter code: MNLIQELEKEQLDKLATGKTIPDFGPGDTVTVNVKVKEGDRTRVQAYEGVCIGRNGGGINESFTVRKISYGEGVERVFPIYSPMIDSIKLVRRGKVRRAKLYYLRGRRGKSARIVEKQDQRQTTTAAAAAE.

This sequence belongs to the bacterial ribosomal protein bL19 family.

Functionally, this protein is located at the 30S-50S ribosomal subunit interface and may play a role in the structure and function of the aminoacyl-tRNA binding site. In Afipia carboxidovorans (strain ATCC 49405 / DSM 1227 / KCTC 32145 / OM5) (Oligotropha carboxidovorans), this protein is Large ribosomal subunit protein bL19.